The following is a 267-amino-acid chain: Tryptophan synthase alpha chain (267 aa).

Residues Glu-39 and Asp-50 each act as proton acceptor in the active site.

Belongs to the TrpA family. As to quaternary structure, tetramer of two alpha and two beta chains.

The enzyme catalyses (1S,2R)-1-C-(indol-3-yl)glycerol 3-phosphate + L-serine = D-glyceraldehyde 3-phosphate + L-tryptophan + H2O. Its pathway is amino-acid biosynthesis; L-tryptophan biosynthesis; L-tryptophan from chorismate: step 5/5. In terms of biological role, the alpha subunit is responsible for the aldol cleavage of indoleglycerol phosphate to indole and glyceraldehyde 3-phosphate. The sequence is that of Tryptophan synthase alpha chain from Helicobacter hepaticus (strain ATCC 51449 / 3B1).